The following is an 80-amino-acid chain: Serine rich endogenous peptide 15 (80 aa).

Positions 1–28 are cleaved as a signal peptide; the sequence is MSKEKSYVIALLLSLLLCLSFQVGVSEA. Short sequence motifs (SCOOP motif) lie at residues 32 to 46 and 66 to 80; these read AVTT…CANG and PRVA…GKGP. The disordered stretch occupies residues 37–80; it reads YSDSPRCANGSSASPPTRHCPRGRPRPPTPRVAVHSNSTKGKGP. 2 consecutive short sequence motifs (sxS motif essential for MIK2 binding) follow at residues 38–40 and 72–74; these read SDS and SNS. The segment covering 71 to 80 has biased composition (polar residues); that stretch reads HSNSTKGKGP.

It belongs to the serine rich endogenous peptide (SCOOP) phytocytokine family. Interacts with MIK2 (via extracellular leucine-rich repeat domain); this interaction triggers the formation of complex between MIK2 and the BAK1/SERK3 and SERK4 coreceptors, and subsequent BAK1 activation by phosphorylation. In terms of tissue distribution, mostly expressed in leaves, and, to a lower extent, in seedlings shoots, roots, stems, siliques, seeds and flowers.

The protein resides in the cell membrane. It localises to the secreted. Its subcellular location is the extracellular space. It is found in the apoplast. The protein localises to the endoplasmic reticulum. The protein resides in the golgi apparatus. In terms of biological role, brassicaceae-specific phytocytokine (plant endogenous peptide released into the apoplast) perceived by MIK2 in a BAK1/SERK3 and SERK4 coreceptors-dependent manner, that modulates various physiological and antimicrobial processes including growth prevention and reactive oxygen species (ROS) response regulation. Inhibits root growth. In Arabidopsis thaliana (Mouse-ear cress), this protein is Serine rich endogenous peptide 15.